A 419-amino-acid chain; its full sequence is Circumsporozoite protein (419 aa).

Positions 1–23 are cleaved as a signal peptide; sequence MKNFNLLAVSSILLVDLFRTHWG. The interval 50-111 is disordered; the sequence is AQVRQSASRG…GNAGGNAGGN (62 aa). Over residues 65–95 the composition is skewed to basic and acidic residues; the sequence is NPKEEDGADKKKKKDEKQVEPKKPRENKLKQ. Residues 81 to 89 are required for the binding to heparan sulfate proteoglycans (HSPGs) on the surface of host hepatocytes; it reads KQVEPKKPR. The interval 92-96 is region I; contains the proteolytic cleavage site; the sequence is KLKQP. 38 repeat units span residues 99-102, 103-106, 107-110, 111-114, 115-118, 119-122, 123-126, 127-130, 131-134, 135-138, 139-142, 143-146, 147-150, 151-154, 155-158, 159-162, 163-166, 167-170, 171-174, 175-178, 179-182, 183-186, 187-190, 191-194, 195-198, 199-202, 203-206, 207-210, 211-214, 215-218, 219-222, 223-226, 227-230, 231-234, 235-238, 239-242, 243-246, and 247-250. The 54 X 4 AA approximate tandem repeats of N-A-G-G stretch occupies residues 99–314; it reads NADGNAGGNA…GGNAGANAGN (216 aa). The tract at residues 146 to 237 is disordered; that stretch reads GNADGNAGGN…ADGNAGGNAG (92 aa). One copy of the 39; approximate repeat lies at 251–254; the sequence is TAGG. Tandem repeats lie at residues 255-258, 259-262, 263-266, 267-270, 271-274, 275-278, 279-282, 283-286, 287-290, 291-294, 295-298, 299-302, and 303-306. The 53; approximate repeat unit spans residues 307–310; sequence NAGA. The stretch at 311–314 is one 54; approximate repeat; sequence NAGN. The disordered stretch occupies residues 312-332; sequence AGNKKAGDAGAGQGQNNEAAN. A TSP type-1 domain is found at 345 to 397; the sequence is KIRSTISTEWSPCSVTCGKGVRMRKKVSAANKKPEELDVNDLETEVCTMDKCA. 2 cysteine pairs are disulfide-bonded: Cys-357-Cys-391 and Cys-361-Cys-396. Residue Thr-360 is glycosylated (O-linked (Fuc) threonine). A lipid anchor (GPI-anchor amidated cysteine) is attached at Cys-396. A propeptide spans 397-419 (removed in mature form); it reads AGIFNVVSNSLRLVILLVLALFN.

The protein belongs to the plasmodium circumsporozoite protein family. During host cell invasion, proteolytically cleaved at the cell membrane in the region I by a papain-like cysteine protease of parasite origin. Cleavage is triggered by the sporozoite contact with highly sulfated heparan sulfate proteoglycans (HSPGs) present on the host hepatocyte cell surface. Cleavage exposes the TSP type-1 (TSR) domain and is required for productive invasion of host hepatocytes but not for adhesion to the host cell membrane. Cleavage is dispensable for sporozoite development in the oocyst, motility and for traversal of host and vector cells. Post-translationally, O-glycosylated; maybe by POFUT2.

Its subcellular location is the cell membrane. The protein localises to the cytoplasm. Functionally, essential sporozoite protein. In the mosquito vector, required for sporozoite development in the oocyst, migration through the vector hemolymph and entry into the vector salivary glands. In the vertebrate host, required for sporozoite migration through the host dermis and infection of host hepatocytes. Binds to highly sulfated heparan sulfate proteoglycans (HSPGs) on the surface of host hepatocytes. In the vertebrate host, binds to highly sulfated heparan sulfate proteoglycans (HSPGs) on the surface of host hepatocytes and is required for sporozoite invasion of the host hepatocytes. In Plasmodium cynomolgi (strain Mulligan/NIH), this protein is Circumsporozoite protein.